The sequence spans 226 residues: DNA mismatch repair protein MutH (226 aa).

This sequence belongs to the MutH family.

The protein resides in the cytoplasm. Sequence-specific endonuclease that cleaves unmethylated GATC sequences. It is involved in DNA mismatch repair. This is DNA mismatch repair protein MutH from Vibrio campbellii (strain ATCC BAA-1116).